Consider the following 713-residue polypeptide: Catalase-peroxidase (713 aa).

The tryptophyl-tyrosyl-methioninium (Trp-Tyr) (with M-226) cross-link spans 77–200; sequence WHSAGTYRTT…LGATVMGLIY (124 aa). Residue His-78 is the Proton acceptor of the active site. Positions 200–226 form a cross-link, tryptophyl-tyrosyl-methioninium (Tyr-Met) (with W-77); sequence YVNPEGPDGEPDLEGSAANIRESFGRM. A heme b-binding site is contributed by His-241.

This sequence belongs to the peroxidase family. Peroxidase/catalase subfamily. Homodimer or homotetramer. Heme b is required as a cofactor. Post-translationally, formation of the three residue Trp-Tyr-Met cross-link is important for the catalase, but not the peroxidase activity of the enzyme.

The catalysed reaction is H2O2 + AH2 = A + 2 H2O. The enzyme catalyses 2 H2O2 = O2 + 2 H2O. Bifunctional enzyme with both catalase and broad-spectrum peroxidase activity. The sequence is that of Catalase-peroxidase from Natronomonas pharaonis (strain ATCC 35678 / DSM 2160 / CIP 103997 / JCM 8858 / NBRC 14720 / NCIMB 2260 / Gabara) (Halobacterium pharaonis).